Consider the following 117-residue polypeptide: MAQHYRVGRLEQEIEREVNDILLKRVRDPRVAGVTITGVTVTGDLQQATIYYSILSDKASDGEKTAAGLAKATGLIRSELGSRLSIYKTPELTFERDNSVQYGSRIDELINNLKRQD.

It belongs to the RbfA family. As to quaternary structure, monomer. Binds 30S ribosomal subunits, but not 50S ribosomal subunits or 70S ribosomes.

The protein resides in the cytoplasm. Its function is as follows. One of several proteins that assist in the late maturation steps of the functional core of the 30S ribosomal subunit. Associates with free 30S ribosomal subunits (but not with 30S subunits that are part of 70S ribosomes or polysomes). Required for efficient processing of 16S rRNA. May interact with the 5'-terminal helix region of 16S rRNA. The chain is Ribosome-binding factor A from Lactiplantibacillus plantarum (strain ATCC BAA-793 / NCIMB 8826 / WCFS1) (Lactobacillus plantarum).